Reading from the N-terminus, the 54-residue chain is Large ribosomal subunit protein bL32 (54 aa).

A disordered region spans residues 1-26 (MAVQKNKPTRSKRGMRRSHDSLTAPH). Over residues 7 to 16 (KPTRSKRGMR) the composition is skewed to basic residues.

The protein belongs to the bacterial ribosomal protein bL32 family.

This Buchnera aphidicola subsp. Acyrthosiphon pisum (strain 5A) protein is Large ribosomal subunit protein bL32.